Here is a 567-residue protein sequence, read N- to C-terminus: Arginine--tRNA ligase (567 aa).

Positions 128–138 (ANPTGPLHVGH) match the 'HIGH' region motif.

Belongs to the class-I aminoacyl-tRNA synthetase family. Monomer.

Its subcellular location is the cytoplasm. The enzyme catalyses tRNA(Arg) + L-arginine + ATP = L-arginyl-tRNA(Arg) + AMP + diphosphate. This chain is Arginine--tRNA ligase, found in Acidovorax ebreus (strain TPSY) (Diaphorobacter sp. (strain TPSY)).